We begin with the raw amino-acid sequence, 258 residues long: ProSAAS (258 aa).

The signal sequence occupies residues 1–33; it reads MAGSPLLCGPRAGGVGILVLLLLGLLRLPPTLS. Residues 34-213 are proSAAS(1-180); the sequence is ARPVKEPRSL…SSEPEAAPAP (180 aa). Disordered stretches follow at residues 156–188, 204–230, and 239–258; these read PAPA…TPDV, SSEP…EVPP, and RVKR…LLPP. Residues 177–188 are compositionally biased toward acidic residues; the sequence is DVEDAGDETPDV. Low complexity predominate over residues 204 to 213; sequence SSEPEAAPAP. The C-terminal inhibitory domain; interacts with PCSK1 stretch occupies residues 219 to 258; it reads SVDQDLGPEVPPENVLGALLRVKRLENPSPQAPARRLLPP. The Sufficient for inhibition of PCSK1 signature appears at 237–242; that stretch reads LLRVKR.

In terms of assembly, interacts via the C-terminal inhibitory domain with PCSK1 66 kDa form. Proteolytically cleaved in the Golgi. Little SAAS, PEN, PEN-20 and Big LEN are the major processed peptides in proSAAS-overexpressing AtT-20 pituitary corticotropic cell line. As to expression, expressed in brain (mostly hypothalamus and pituitary) and gut. Expressed in trigeminal ganglia and neuroendocrine cell lines. In terms of tissue distribution, expressed in pancreas, spinal cord and brain (most abundant in striatum, hippocampus, pons and medulla, and cortex) (at protein level).

It localises to the secreted. The protein localises to the golgi apparatus. It is found in the trans-Golgi network. Functionally, may function in the control of the neuroendocrine secretory pathway. Proposed be a specific endogenous inhibitor of PCSK1. ProSAAS and Big PEN-LEN, both containing the C-terminal inhibitory domain, but not the processed peptides reduce PCSK1 activity in the endoplasmic reticulum and Golgi. It reduces the activity of the 87 kDa form but not the autocatalytically derived 66 kDa form of PCSK1. Subsequent processing of proSAAS may eliminate the inhibition. Slows down convertase-mediated processing of proopiomelanocortin and proenkephalin. May control the intracellular timing of PCSK1 rather than its total level of activity. Endogenous ligand for GPR171. Neuropeptide involved in the regulation of feeding. Its function is as follows. Endogenous ligand for GPR171. Neuropeptide involved in the regulation of feeding. The polypeptide is ProSAAS (Pcsk1n) (Mus musculus (Mouse)).